The following is a 470-amino-acid chain: MNRHISEILEKYLGRIPSLTEYHTLKSQYKNIHRVNIFNKDIFISLIKKNKKKFFSDIDTSVSEIKKLVFDYFTKQEQTYSIGKLYTIIELQTILVTTYTDILGVLTTKGPDIFSSNVQYNTSSMQKIASDALNSMNIATISDKVMGRHNVSSLVCNVNSLMEEYLRRHNKSCICYGSYSLHLLNPEIKYGDIDILQTNSRTFLIDLAFLIKFITGYNVILLKVPYLKNYMVLKDQNDSHIIDSFNIRQETMQHIPKVLIDNIYIVDPTIQLLSMLKMLSQIDRLEDLAKNPDKLTIRFATLLEYVRNKYGIILNGNSNNMPMPATIDIKKRIITVDTKYYNFAYDKCYVYLDENSLSSDILSLNADDAVDFENVSNSAFLVNDKTLYTYFSNTVLLSGNDKIHEISSRGISAHILIYQALMKHDISIPLTDIVNSLIGRNKQPIYEIIPRDKKTGKHGIIDIEKDIITH.

Active-site residues include Asp192 and Asp194.

The protein belongs to the poxviridae poly(A) polymerase catalytic subunit family. In terms of assembly, heterodimer of a large (catalytic) subunit and a small (regulatory) subunit.

It carries out the reaction RNA(n) + ATP = RNA(n)-3'-adenine ribonucleotide + diphosphate. In terms of biological role, polymerase that creates the 3'-poly(A) tail of mRNA's. The sequence is that of Poly(A) polymerase catalytic subunit (PAPL) from Odocoileus hemionus (Mule deer).